The chain runs to 946 residues: Serine/threonine-protein kinase PLK4 (946 aa).

Residues 12-265 enclose the Protein kinase domain; it reads FKVLNLLGKG…LSSVLDHAFM (254 aa). ATP-binding positions include 18–26 and lysine 41; that span reads LGKGSFACV. The Proton acceptor role is filled by aspartate 136. Residues 330-395 are disordered; sequence HPAERSNGGS…TYGKPSSFSE (66 aa). Residues 378 to 394 show a composition bias toward polar residues; sequence RSGTSQSQTYGKPSSFS. The region spanning 566–679 is the Cryptic POLO box 1 (CPB1) domain; the sequence is TLRSIISPLN…AKFIQLVRSK (114 aa). One can recognise a Cryptic POLO box 2 (CPB2) domain in the interval 680-792; the sequence is MPKVTYYTRY…GRRPAITESP (113 aa). A disordered region spans residues 789 to 828; sequence TESPRTQLTVDSARERKDEQSSANRVLHSSATSPPQIPNI. The segment covering 809-828 has biased composition (polar residues); the sequence is SSANRVLHSSATSPPQIPNI. The region spanning 864-942 is the POLO box domain; it reads QVLKSVFVEN…LSSILMLFAS (79 aa).

This sequence belongs to the protein kinase superfamily. Ser/Thr protein kinase family. CDC5/Polo subfamily. In terms of assembly, homodimer. Ubiquitinated; leading to its degradation by the proteasome.

The protein resides in the cytoplasm. Its subcellular location is the cytoskeleton. It localises to the microtubule organizing center. It is found in the centrosome. The protein localises to the centriole. It catalyses the reaction L-seryl-[protein] + ATP = O-phospho-L-seryl-[protein] + ADP + H(+). The catalysed reaction is L-threonyl-[protein] + ATP = O-phospho-L-threonyl-[protein] + ADP + H(+). Functionally, serine/threonine-protein kinase that plays a central role in centriole duplication. Able to trigger procentriole formation on the surface of the parental centriole cylinder, leading to the recruitment of centriole biogenesis proteins such as sass6, cpap, ccp110, cep135 and gamma-tubulin. When overexpressed, it is able to induce centrosome amplification through the simultaneous generation of multiple procentrioles adjoining each parental centriole during S phase. Its central role in centriole replication suggests a possible role in tumorigenesis, centrosome aberrations being frequently observed in tumors. Also involved in deuterosome-mediated centriole amplification in multiciliated that can generate more than 100 centrioles. This is Serine/threonine-protein kinase PLK4 from Xenopus tropicalis (Western clawed frog).